A 201-amino-acid chain; its full sequence is NADH-quinone oxidoreductase subunit C 1 (201 aa).

This sequence belongs to the complex I 30 kDa subunit family. As to quaternary structure, NDH-1 is composed of 14 different subunits. Subunits NuoB, C, D, E, F, and G constitute the peripheral sector of the complex.

It is found in the cell inner membrane. The catalysed reaction is a quinone + NADH + 5 H(+)(in) = a quinol + NAD(+) + 4 H(+)(out). Its function is as follows. NDH-1 shuttles electrons from NADH, via FMN and iron-sulfur (Fe-S) centers, to quinones in the respiratory chain. The immediate electron acceptor for the enzyme in this species is believed to be ubiquinone. Couples the redox reaction to proton translocation (for every two electrons transferred, four hydrogen ions are translocated across the cytoplasmic membrane), and thus conserves the redox energy in a proton gradient. The polypeptide is NADH-quinone oxidoreductase subunit C 1 (Rhizobium meliloti (strain 1021) (Ensifer meliloti)).